A 950-amino-acid chain; its full sequence is Serine/threonine-protein kinase 10-A (950 aa).

The Protein kinase domain occupies 36-294 (WEIIGELGDG…AAQLLEHPFV (259 aa)). Residues 42–50 (LGDGAFGKV) and Lys-65 each bind ATP. Asp-157 functions as the Proton acceptor in the catalytic mechanism. A compositionally biased stretch (acidic residues) spans 319–331 (EEQGEAEEEEDSD). The interval 319 to 478 (EEQGEAEEEE…DSGSNSASES (160 aa)) is disordered. The span at 347-356 (EIGKDIEREQ) shows a compositional bias: basic and acidic residues. Residues 365 to 382 (SATSPQKTDSQADNYSQR) show a composition bias toward polar residues. Over residues 416-432 (EPKRNSTAESYRGEEHS) the composition is skewed to basic and acidic residues. The segment covering 433-445 (SASSQRQRSAQSA) has biased composition (low complexity). Residues 452–463 (SFDSPTRYFTNW) show a composition bias toward polar residues. Residues Ser-482, Ser-486, and Ser-490 each carry the phosphoserine; by PLK1 modification. Positions 634 to 786 (IKFLEQLKLR…QLRLRQQQEK (153 aa)) form a coiled coil.

Belongs to the protein kinase superfamily. STE Ser/Thr protein kinase family. STE20 subfamily. Homodimer. In terms of processing, autophosphorylates. Phosphorylated by plk1/plx1, suggesting the existence of a feedback loop with plk1/plx1. activation of the protein.

It is found in the cell membrane. The enzyme catalyses L-seryl-[protein] + ATP = O-phospho-L-seryl-[protein] + ADP + H(+). It carries out the reaction L-threonyl-[protein] + ATP = O-phospho-L-threonyl-[protein] + ADP + H(+). May act as a polo kinase kinase by mediating phosphorylation of plk1/plx1 and subsequent activation of plk1/plx1 during oocyte maturation. The protein is Serine/threonine-protein kinase 10-A (stk10-a) of Xenopus laevis (African clawed frog).